The chain runs to 290 residues: Small ribosomal subunit protein uS11 (290 aa).

Positions 243 to 271 are disordered; the sequence is DWEAAPAGFPATGEWSDAAPGAAAPNWDA. Residues 257 to 271 show a composition bias toward low complexity; sequence WSDAAPGAAAPNWDA.

The protein belongs to the universal ribosomal protein uS2 family. Component of the small ribosomal subunit (SSU). Mature N.crassa ribosomes consist of a small (40S) and a large (60S) subunit. The 40S small subunit contains 1 molecule of ribosomal RNA (18S rRNA) and at least 32 different proteins. The large 60S subunit contains 3 rRNA molecules (26S, 5.8S and 5S rRNA) and at least 42 different proteins. Interacts with rps21.

Its subcellular location is the cytoplasm. Functionally, component of the ribosome, a large ribonucleoprotein complex responsible for the synthesis of proteins in the cell. The small ribosomal subunit (SSU) binds messenger RNAs (mRNAs) and translates the encoded message by selecting cognate aminoacyl-transfer RNA (tRNA) molecules. The large subunit (LSU) contains the ribosomal catalytic site termed the peptidyl transferase center (PTC), which catalyzes the formation of peptide bonds, thereby polymerizing the amino acids delivered by tRNAs into a polypeptide chain. The nascent polypeptides leave the ribosome through a tunnel in the LSU and interact with protein factors that function in enzymatic processing, targeting, and the membrane insertion of nascent chains at the exit of the ribosomal tunnel. uS2 is required for the assembly and/or stability of the 40S ribosomal subunit. Required for the processing of the 20S rRNA-precursor to mature 18S rRNA in a late step of the maturation of 40S ribosomal subunits. This chain is Small ribosomal subunit protein uS11, found in Neurospora crassa (strain ATCC 24698 / 74-OR23-1A / CBS 708.71 / DSM 1257 / FGSC 987).